Reading from the N-terminus, the 113-residue chain is UPF0122 protein M6_Spy0905 (113 aa).

It belongs to the UPF0122 family.

In terms of biological role, might take part in the signal recognition particle (SRP) pathway. This is inferred from the conservation of its genetic proximity to ftsY/ffh. May be a regulatory protein. This is UPF0122 protein M6_Spy0905 from Streptococcus pyogenes serotype M6 (strain ATCC BAA-946 / MGAS10394).